The sequence spans 827 residues: MKIEKTALTVAIALAMSSLSAHAEDAWVSTHTQAAMSPPASTQVLAASSTSATTTGNAYTLNMTGSPRIDGAAVTALEADHPLHVEVALKLRNPDALQTFLAGVTTPGSALFGKFLTPSQFTERFGPTQSQVDAVVAHLQQAGFTNIEVAPNRLLISADGTAGAATNGFRTSIKRFSANGREFFANDAPALVPASLGDSVNAVLGLQNVSVKHTLHHVYHPEDVTVPGPNVGTQAAAAVAAHHPQDFAAIYGGSSLPAATNTAVGIITWGSITQTVTDLNSFTSGAGLATVNSTITKVGSGTFANDPDSNGEWSLDSQDIVGIAGGVKQLIFYTSANGDSSSSGITDAGITASYNRAVTDNIAKLINVSLGEDETAAQQSGTQAADDAIFQQAVAQGQTFSIASGDAGVYQWSTDPTSGSPGYVANSAGTVKIDLTHYSVSEPASSPYVIQVGGTTLSTSGTTWSGETVWNEGLSAIAPSQGDNNQRLWATGGGVSLYEAAPSWQSSVSSSTKRVGPDLAFDAASSSGALIVVNGSTEQVGGTSLASPLFVGAFARIESAANNAIGFPASKFYQAFPTQTSLLHDVTSGNNGYQSHGYTAATGFDEATGFGSFDIGKLNTYAQANWVTGGGGGSTNAPPVANFSVATTGLVATFTDSSTDSDGSIASHAWTFGDGSTSTATSPSHTYSAAGTYSVAETVTDNAGATSTKTSSVTVSSSGGTGGGTVLQNGVAATGLSAAKNGQLKYTVAIPSGAKSLKIAISGGTGDADLYVKFGSAPTTSSYDCRPYVTGNTESCSFASPQTGTYYVLLNGYAAFSGVSLKATWTN.

Positions 1-23 (MKIEKTALTVAIALAMSSLSAHA) are cleaved as a signal peptide. The propeptide at 24–237 (EDAWVSTHTQ…GPNVGTQAAA (214 aa)) is removed in mature form. Positions 241-625 (AHHPQDFAAI…GKLNTYAQAN (385 aa)) constitute a Peptidase S53 domain. Catalysis depends on charge relay system residues glutamate 312, aspartate 316, and serine 544. The Ca(2+) site is built by aspartate 585, valine 586, alanine 601, glycine 603, and aspartate 605. In terms of domain architecture, PKD spans 635–722 (TNAPPVANFS…VTVSSSGGTG (88 aa)). The propeptide at 636-827 (NAPPVANFSV…GVSLKATWTN (192 aa)) is removed in mature form.

It depends on Ca(2+) as a cofactor. In terms of processing, autocatalytically processed.

The protein resides in the secreted. The catalysed reaction is Cleavage of casein.. Its activity is regulated as follows. Inhibited by 1,2-epoxy-3-(p-nitrophenoxy)propane (EPNP), but not by pepstatin, pepstatin Ac (S-PI) and diazoacetyl-DL-norleucine methyl ester (DAN). Not inhibited by metal ions. Functionally, pepstatin-insensitive serine-carboxyl proteinase. Shows activity on acid-denatured hemoglobin and on casein. The sequence is that of Xanthomonalisin from Xanthomonas sp. (strain T-22).